The sequence spans 427 residues: Methylenetetrahydrofolate--tRNA-(uracil-5-)-methyltransferase TrmFO (427 aa).

8 to 13 (GAGISG) serves as a coordination point for FAD.

It belongs to the MnmG family. TrmFO subfamily. FAD is required as a cofactor.

It localises to the cytoplasm. The catalysed reaction is uridine(54) in tRNA + (6R)-5,10-methylene-5,6,7,8-tetrahydrofolate + NADH + H(+) = 5-methyluridine(54) in tRNA + (6S)-5,6,7,8-tetrahydrofolate + NAD(+). It catalyses the reaction uridine(54) in tRNA + (6R)-5,10-methylene-5,6,7,8-tetrahydrofolate + NADPH + H(+) = 5-methyluridine(54) in tRNA + (6S)-5,6,7,8-tetrahydrofolate + NADP(+). Functionally, catalyzes the folate-dependent formation of 5-methyl-uridine at position 54 (M-5-U54) in all tRNAs. The protein is Methylenetetrahydrofolate--tRNA-(uracil-5-)-methyltransferase TrmFO of Mycoplasmopsis agalactiae (strain NCTC 10123 / CIP 59.7 / PG2) (Mycoplasma agalactiae).